We begin with the raw amino-acid sequence, 436 residues long: Septin-7 (436 aa).

The residue at position 2 (S2) is an N-acetylserine. Y29 carries the phosphotyrosine modification. The 270-residue stretch at 46 to 315 (RGFEFTLMVV…ENYRSRKLAA (270 aa)) folds into the Septin-type G domain. The interval 46–316 (RGFEFTLMVV…NYRSRKLAAV (271 aa)) is interaction with SEPTIN12. The segment at 56-63 (GESGLGKS) is G1 motif. A GTP-binding site is contributed by 56-63 (GESGLGKS). S76 is modified (phosphoserine). GTP-binding positions include T89, G115, and 194 to 202 (KADTLTPEE). The G3 motif stretch occupies residues 112-115 (DTPG). Positions 193-196 (AKAD) are G4 motif. Residue T227 is modified to Phosphothreonine. GTP is bound by residues G249 and R264. Residues 331-436 (TKSPLAQMEE…EKNKKKGKIF (106 aa)) adopt a coiled-coil conformation. S333 bears the Phosphoserine mark. Position 372 is an N6-acetyllysine (K372). The span at 377-409 (ELQRRHEQMKKNLEAQHKELEEKRRQFEEEKAN) shows a compositional bias: basic and acidic residues. The interval 377 to 436 (ELQRRHEQMKKNLEAQHKELEEKRRQFEEEKANWEAQQRILEQQNSSRTLEKNKKKGKIF) is disordered. S423 bears the Phosphoserine mark. T425 carries the phosphothreonine modification.

Belongs to the TRAFAC class TrmE-Era-EngA-EngB-Septin-like GTPase superfamily. Septin GTPase family. Septins polymerize into heterooligomeric protein complexes that form filaments, and associate with cellular membranes, actin filaments and microtubules. GTPase activity is required for filament formation. Filaments are assembled from asymmetrical heterotrimers, composed of SEPTIN2, SEPTIN6 and SEPTIN7 that associate head-to-head to form a hexameric unit. Within the trimer, directly interacts with SEPTIN6, while interaction with SEPTIN2 seems indirect. In the absence of SEPTIN6, forms homodimers. Interacts directly with CENPE and links CENPE to septin filaments composed of SEPTIN2, SEPTIN6 and SEPTIN7. Interacts with SEPTIN8, SEPTIN9 and SEPTIN11. Component of a septin core octameric complex consisting of SEPTIN12, SEPTIN7, SEPTIN6 and SEPTIN2 or SEPTIN4 in the order 12-7-6-2-2-6-7-12 or 12-7-6-4-4-6-7-12 and located in the sperm annulus; the SEPTIN12:SEPTIN7 association is mediated by the respective GTP-binding domains. Interacts with SEPTIN2 and SEPTIN5. Expressed in the cerebral cortex (at protein level).

The protein resides in the cytoplasm. It is found in the chromosome. It localises to the centromere. Its subcellular location is the kinetochore. The protein localises to the cytoskeleton. The protein resides in the spindle. It is found in the cleavage furrow. It localises to the midbody. Its subcellular location is the cilium axoneme. The protein localises to the cell projection. The protein resides in the cilium. It is found in the flagellum. Filament-forming cytoskeletal GTPase. Required for normal organization of the actin cytoskeleton. Required for normal progress through mitosis. Involved in cytokinesis. Required for normal association of CENPE with the kinetochore. Plays a role in ciliogenesis and collective cell movements. Forms a filamentous structure with SEPTIN12, SEPTIN6, SEPTIN2 and probably SEPTIN4 at the sperm annulus which is required for the structural integrity and motility of the sperm tail during postmeiotic differentiation. The sequence is that of Septin-7 from Mus musculus (Mouse).